The following is a 219-amino-acid chain: Octanoyltransferase (219 aa).

In terms of domain architecture, BPL/LPL catalytic spans 34-209; it reads SESPDELWIV…TFSQLLGYQH (176 aa). Substrate-binding positions include 73–80, 140–142, and 153–155; these read RGGQVTYH, SLG, and GLA. Catalysis depends on cysteine 171, which acts as the Acyl-thioester intermediate.

The protein belongs to the LipB family.

It is found in the cytoplasm. The catalysed reaction is octanoyl-[ACP] + L-lysyl-[protein] = N(6)-octanoyl-L-lysyl-[protein] + holo-[ACP] + H(+). The protein operates within protein modification; protein lipoylation via endogenous pathway; protein N(6)-(lipoyl)lysine from octanoyl-[acyl-carrier-protein]: step 1/2. In terms of biological role, catalyzes the transfer of endogenously produced octanoic acid from octanoyl-acyl-carrier-protein onto the lipoyl domains of lipoate-dependent enzymes. Lipoyl-ACP can also act as a substrate although octanoyl-ACP is likely to be the physiological substrate. The protein is Octanoyltransferase of Shewanella putrefaciens (strain CN-32 / ATCC BAA-453).